We begin with the raw amino-acid sequence, 147 residues long: MNIGEASKTSGVSSKMIRYYEQIGLISPALRTESSYRTYGDNDVHTLRFVRRARDLGFSVEQIKELLALWRDRSRASSDVKAVALEHIAELERKIAAIQEMTRTLKHLAGHCHGDDRPDCPIIEEIANGSAQVNMEVNPRFGVAALK.

Residues 1-69 (MNIGEASKTS…VEQIKELLAL (69 aa)) form the HTH merR-type domain. The H-T-H motif DNA-binding region spans 3–22 (IGEASKTSGVSSKMIRYYEQ).

The protein resides in the cytoplasm. Functionally, transcriptional regulator involved in acid tolerance. Binds copper. This chain is Heavy metal-dependent transcription regulator 2 (hmrR2), found in Rhizobium meliloti (strain 1021) (Ensifer meliloti).